Reading from the N-terminus, the 404-residue chain is uncharacterized protein (404 aa).

This is an uncharacterized protein from Mycoplasma genitalium (strain ATCC 33530 / DSM 19775 / NCTC 10195 / G37) (Mycoplasmoides genitalium).